The following is a 417-amino-acid chain: Serine--tRNA ligase (417 aa).

226-228 (TSE) lines the L-serine pocket. ATP-binding positions include 257–259 (RRE) and V273. E280 contributes to the L-serine binding site. ATP is bound at residue 344–347 (ELTS). Position 379 (T379) interacts with L-serine.

The protein belongs to the class-II aminoacyl-tRNA synthetase family. Type-1 seryl-tRNA synthetase subfamily. As to quaternary structure, homodimer. The tRNA molecule binds across the dimer.

It is found in the cytoplasm. The enzyme catalyses tRNA(Ser) + L-serine + ATP = L-seryl-tRNA(Ser) + AMP + diphosphate + H(+). It catalyses the reaction tRNA(Sec) + L-serine + ATP = L-seryl-tRNA(Sec) + AMP + diphosphate + H(+). Its pathway is aminoacyl-tRNA biosynthesis; selenocysteinyl-tRNA(Sec) biosynthesis; L-seryl-tRNA(Sec) from L-serine and tRNA(Sec): step 1/1. Its function is as follows. Catalyzes the attachment of serine to tRNA(Ser). Is also able to aminoacylate tRNA(Sec) with serine, to form the misacylated tRNA L-seryl-tRNA(Sec), which will be further converted into selenocysteinyl-tRNA(Sec). This is Serine--tRNA ligase from Mycobacterium sp. (strain KMS).